A 120-amino-acid polypeptide reads, in one-letter code: Dihydroneopterin aldolase (120 aa).

Substrate contacts are provided by Glu-20 and Met-114.

Belongs to the archaeal dihydroneopterin aldolase family. Homotetramer.

It catalyses the reaction 7,8-dihydroneopterin = 6-hydroxymethyl-7,8-dihydropterin + glycolaldehyde. Its function is as follows. Catalyzes the conversion of 7,8-dihydroneopterin (H2Neo) to 6-hydroxymethyl-7,8-dihydropterin (6-HMD). This chain is Dihydroneopterin aldolase, found in Picrophilus torridus (strain ATCC 700027 / DSM 9790 / JCM 10055 / NBRC 100828 / KAW 2/3).